Here is a 375-residue protein sequence, read N- to C-terminus: 5-amino-6-(D-ribitylamino)uracil--L-tyrosine 4-hydroxyphenyl transferase 1 (375 aa).

A Radical SAM core domain is found at valine 50 to histidine 284. Residues cysteine 64, cysteine 68, and cysteine 71 each contribute to the [4Fe-4S] cluster site.

This sequence belongs to the radical SAM superfamily. CofH family. Consists of two subunits, CofG and CofH. Requires [4Fe-4S] cluster as cofactor.

It carries out the reaction 5-amino-6-(D-ribitylamino)uracil + L-tyrosine + S-adenosyl-L-methionine = 5-amino-5-(4-hydroxybenzyl)-6-(D-ribitylimino)-5,6-dihydrouracil + 2-iminoacetate + 5'-deoxyadenosine + L-methionine + H(+). The protein operates within cofactor biosynthesis; coenzyme F0 biosynthesis. Functionally, catalyzes the radical-mediated synthesis of 5-amino-5-(4-hydroxybenzyl)-6-(D-ribitylimino)-5,6-dihydrouracil from 5-amino-6-(D-ribitylamino)uracil and L-tyrosine. The polypeptide is 5-amino-6-(D-ribitylamino)uracil--L-tyrosine 4-hydroxyphenyl transferase 1 (Methanosarcina acetivorans (strain ATCC 35395 / DSM 2834 / JCM 12185 / C2A)).